Here is a 1213-residue protein sequence, read N- to C-terminus: tRNA wybutosine-synthesizing protein 4 (1213 aa).

2 stretches are compositionally biased toward low complexity: residues 1-13 (METTEEVVAPATT) and 39-52 (ATTTTTTTDGTTPT). Residues 1–76 (METTEEVVAP…DDQVMGTNNS (76 aa)) form a disordered region. The segment covering 53–67 (HNEHASAKDPRKAQD) has biased composition (basic and acidic residues). Positions 117, 148, and 180 each coordinate S-adenosyl-L-methionine. The segment covering 215–248 (STPAATTTAAATTTTTTELKTTAATASSTSTEAP) has biased composition (low complexity). Residues 215–272 (STPAATTTAAATTTTTTELKTTAATASSTSTEAPQKPKKSPKPKDKSKAARAPAPTTA) form a disordered region. S-adenosyl-L-methionine contacts are provided by residues 289 to 290 (DL) and glutamate 318. A disordered region spans residues 879-900 (EPRSLPLRNQAPNGAEGNANGS). One can recognise a JmjC domain in the interval 1006 to 1166 (PTEKPAVLSD…YAAGKDVYGN (161 aa)).

The protein belongs to the methyltransferase superfamily. LCMT family.

It catalyses the reaction 7-[(3S)-3-amino-3-carboxypropyl]wyosine(37) in tRNA(Phe) + S-adenosyl-L-methionine = 7-[(3S)-(3-amino-3-methoxycarbonyl)propyl]wyosine(37) in tRNA(Phe) + S-adenosyl-L-homocysteine. The enzyme catalyses 7-[(3S)-(3-amino-3-methoxycarbonyl)propyl]wyosine(37) in tRNA(Phe) + S-adenosyl-L-methionine + CO2 = wybutosine(37) in tRNA(Phe) + S-adenosyl-L-homocysteine + 2 H(+). It functions in the pathway tRNA modification; wybutosine-tRNA(Phe) biosynthesis. Probable S-adenosyl-L-methionine-dependent methyltransferase that acts as a component of the wybutosine biosynthesis pathway. Wybutosine is a hyper modified guanosine with a tricyclic base found at the 3'-position adjacent to the anticodon of eukaryotic phenylalanine tRNA. May methylate the carboxyl group of leucine residues to form alpha-leucine ester residues. This is tRNA wybutosine-synthesizing protein 4 (lcm-2) from Neurospora crassa (strain ATCC 24698 / 74-OR23-1A / CBS 708.71 / DSM 1257 / FGSC 987).